The primary structure comprises 356 residues: Dynein axonemal heavy chain 12 (356 aa).

ANK repeat units lie at residues 17-46 (DSSS…DANV), 50-81 (SGHL…AIKR), 82-111 (SGIS…DVNF), 124-153 (HRKS…MPNQ), 154-183 (DPVN…NVNY), and 185-218 (CRVN…DTEL). Residues 290-345 (WSEIHFILTNPRSLKHLCRLKIRKCMGRLRLRCPVFMSFLPLPSRLKAYVLYKEYD) form the SOCS box domain.

Belongs to the dynein heavy chain family. Consists of at least two heavy chains and a number of intermediate and light chains.

It localises to the cytoplasm. The protein localises to the cytoskeleton. The protein resides in the cilium axoneme. It participates in protein modification; protein ubiquitination. Force generating protein of respiratory cilia. Produces force towards the minus ends of microtubules. Dynein has ATPase activity; the force-producing power stroke is thought to occur on release of ADP. Involved in sperm motility; implicated in sperm flagellar assembly. Functionally, may be a substrate-recognition component of a SCF-like ECS (Elongin-Cullin-SOCS-box protein) E3 ubiquitin-protein ligase complex which mediates the ubiquitination and subsequent proteasomal degradation of target proteins. The protein is Dynein axonemal heavy chain 12 (DNAH12) of Bos taurus (Bovine).